A 96-amino-acid chain; its full sequence is Co-chaperonin GroES (96 aa).

Belongs to the GroES chaperonin family. Heptamer of 7 subunits arranged in a ring. Interacts with the chaperonin GroEL.

The protein localises to the cytoplasm. Together with the chaperonin GroEL, plays an essential role in assisting protein folding. The GroEL-GroES system forms a nano-cage that allows encapsulation of the non-native substrate proteins and provides a physical environment optimized to promote and accelerate protein folding. GroES binds to the apical surface of the GroEL ring, thereby capping the opening of the GroEL channel. The sequence is that of Co-chaperonin GroES from Cupriavidus taiwanensis (strain DSM 17343 / BCRC 17206 / CCUG 44338 / CIP 107171 / LMG 19424 / R1) (Ralstonia taiwanensis (strain LMG 19424)).